Reading from the N-terminus, the 34-residue chain is Photosystem II reaction center protein M (34 aa).

The chain crosses the membrane as a helical span at residues 5–25; sequence ILAFIATVLFILVPTAFLLII.

This sequence belongs to the PsbM family. PSII is composed of 1 copy each of membrane proteins PsbA, PsbB, PsbC, PsbD, PsbE, PsbF, PsbH, PsbI, PsbJ, PsbK, PsbL, PsbM, PsbT, PsbX, PsbY, PsbZ, Psb30/Ycf12, at least 3 peripheral proteins of the oxygen-evolving complex and a large number of cofactors. It forms dimeric complexes.

The protein localises to the plastid. It localises to the chloroplast thylakoid membrane. In terms of biological role, one of the components of the core complex of photosystem II (PSII). PSII is a light-driven water:plastoquinone oxidoreductase that uses light energy to abstract electrons from H(2)O, generating O(2) and a proton gradient subsequently used for ATP formation. It consists of a core antenna complex that captures photons, and an electron transfer chain that converts photonic excitation into a charge separation. This subunit is found at the monomer-monomer interface. The sequence is that of Photosystem II reaction center protein M from Piper cenocladum (Ant piper).